Consider the following 1227-residue polypeptide: Methionine synthase (1227 aa).

Positions 2-325 (SSKVEQLRAQ…QHIAAMSRAV (324 aa)) constitute a Hcy-binding domain. Residues C247, C310, and C311 each coordinate Zn(2+). Residues 356 to 617 (FVNVGERTNV…LPAELRDAVE (262 aa)) enclose the Pterin-binding domain. Positions 650–744 (QQAEWRSWEV…FIEASKEQGK (95 aa)) constitute a B12-binding N-terminal domain. Residues E694, 756-760 (GDVHD), H759, S804, T808, and A860 contribute to the methylcob(III)alamin site. The 136-residue stretch at 746–881 (NGKMVIATVK…SDTQRDDFVA (136 aa)) folds into the B12-binding domain. The region spanning 897-1227 (KKPRTPPVTL…LAPNLGYDAD (331 aa)) is the AdoMet activation domain. Residues D946, R1134, and 1189 to 1190 (YY) each bind S-adenosyl-L-methionine.

This sequence belongs to the vitamin-B12 dependent methionine synthase family. Requires methylcob(III)alamin as cofactor. The cofactor is Zn(2+).

It catalyses the reaction (6S)-5-methyl-5,6,7,8-tetrahydrofolate + L-homocysteine = (6S)-5,6,7,8-tetrahydrofolate + L-methionine. The protein operates within amino-acid biosynthesis; L-methionine biosynthesis via de novo pathway; L-methionine from L-homocysteine (MetH route): step 1/1. Its function is as follows. Catalyzes the transfer of a methyl group from methyl-cobalamin to homocysteine, yielding enzyme-bound cob(I)alamin and methionine. Subsequently, remethylates the cofactor using methyltetrahydrofolate. This Escherichia coli (strain K12) protein is Methionine synthase (metH).